A 250-amino-acid polypeptide reads, in one-letter code: Probable transcriptional regulatory protein Ppha_0657 (250 aa).

Belongs to the TACO1 family.

It is found in the cytoplasm. The chain is Probable transcriptional regulatory protein Ppha_0657 from Pelodictyon phaeoclathratiforme (strain DSM 5477 / BU-1).